The following is a 255-amino-acid chain: 1-(5-phosphoribosyl)-5-[(5-phosphoribosylamino)methylideneamino] imidazole-4-carboxamide isomerase (255 aa).

Asp8 (proton acceptor) is an active-site residue. Asp129 functions as the Proton donor in the catalytic mechanism.

Belongs to the HisA/HisF family.

It is found in the cytoplasm. The enzyme catalyses 1-(5-phospho-beta-D-ribosyl)-5-[(5-phospho-beta-D-ribosylamino)methylideneamino]imidazole-4-carboxamide = 5-[(5-phospho-1-deoxy-D-ribulos-1-ylimino)methylamino]-1-(5-phospho-beta-D-ribosyl)imidazole-4-carboxamide. It functions in the pathway amino-acid biosynthesis; L-histidine biosynthesis; L-histidine from 5-phospho-alpha-D-ribose 1-diphosphate: step 4/9. The polypeptide is 1-(5-phosphoribosyl)-5-[(5-phosphoribosylamino)methylideneamino] imidazole-4-carboxamide isomerase (Prochlorococcus marinus (strain MIT 9303)).